Consider the following 1055-residue polypeptide: SMC5-SMC6 complex localization factor protein 1 (1055 aa).

BRCT domains lie at 2-80 and 121-199; these read EDDA…AQSG and PGAF…LLEK. Residues 312–332 form a disordered region; it reads KKRKKEKERDSRKDIEHDRST. Over residues 318 to 332 the composition is skewed to basic and acidic residues; that stretch reads KERDSRKDIEHDRST. Residues 407-1055 form an NSE5-like domain; mediates interaction with SLF2 region; it reads PRGILNLIES…VMCRSVTEIS (649 aa). ANK repeat units follow at residues 804–834, 838–867, and 872–901; these read KGET…DINV, AGWT…EVDL, and DGVT…PVLL. Lys-929 is covalently cross-linked (Glycyl lysine isopeptide (Lys-Gly) (interchain with G-Cter in SUMO2)).

Interacts (via N-terminus) with SLF2; this interaction links RAD18 to the SMC5-SMC6 complex. Interacts (via BRCT domains) with RAD18; this interaction occurs in a SLF2-independent manner. Interacts with SMC6. Interacts (via BRCT domains) with RAD18 (via C-terminus and phosphorylated form); this interaction is required for efficient repair of UV-induced DNA damage.

The protein localises to the nucleus. It localises to the cytoplasm. It is found in the cytoskeleton. The protein resides in the microtubule organizing center. Its subcellular location is the centrosome. Plays a role in the DNA damage response (DDR) pathway by regulating postreplication repair of UV-damaged DNA and genomic stability maintenance. The SLF1-SLF2 complex acts to link RAD18 with the SMC5-SMC6 complex at replication-coupled interstrand cross-links (ICL) and DNA double-strand breaks (DSBs) sites on chromatin during DNA repair in response to stalled replication forks. Promotes the recruitment of SLF2 and the SMC5-SMC6 complex to DNA lesions. This chain is SMC5-SMC6 complex localization factor protein 1, found in Bos taurus (Bovine).